Here is a 568-residue protein sequence, read N- to C-terminus: K(+) efflux antiporter 5 (568 aa).

The signal sequence occupies residues 1-20 (MARFAVIGLTFLLLLGTSLS). The interval 59 to 78 (EFSENDSPEGSDGASFNSSV) is disordered. 12 helical membrane passes run 154–174 (LISD…VFSC), 178–198 (PVIV…LKFI), 201–221 (MVQV…ALGL), 230–250 (VVGP…MFLC), 264–284 (GIFV…KFLV), 298–318 (IGIL…LPVL), 334–354 (LLLI…SFVP), 389–409 (LGLS…TTEF), 422–442 (NLFA…HFLW), 447–467 (ILLA…AVVV), 476–496 (ISFH…VLLS), and 510–530 (LLLL…FKLI).

The protein belongs to the monovalent cation:proton antiporter 2 (CPA2) transporter (TC 2.A.37) family. KEA (TC 2.A.37.1) subfamily. Expressed in roots, stems, leaves, flowers and silique.

It localises to the golgi apparatus membrane. The protein resides in the golgi apparatus. It is found in the trans-Golgi network membrane. The protein localises to the prevacuolar compartment membrane. Its subcellular location is the endomembrane system. It carries out the reaction K(+)(in) + H(+)(out) = K(+)(out) + H(+)(in). Its function is as follows. Electroneutral K(+)/H(+) efflux antiporter involved in K(+) homeostasis and osmotic adjustment. Together with KEA4 and KEA6, promotes growth and development, and facilitates endosomal pH and ions homeostasis, as well as salt tolerance (e.g. K(+), NaCl and LiCl), probably by supporting cell wall biosynthesis during rapid etiolated seedling growth. The protein is K(+) efflux antiporter 5 of Arabidopsis thaliana (Mouse-ear cress).